A 344-amino-acid polypeptide reads, in one-letter code: Aurora kinase B (344 aa).

Threonine 35 is modified (phosphothreonine). Serine 62 is modified (phosphoserine). Position 64 is a phosphothreonine (threonine 64). The Protein kinase domain occupies 77–327; the sequence is FEIGRPLGKG…LAQVSAHPWV (251 aa). ATP-binding positions include 83 to 91 and lysine 106; that span reads LGKGKFGNV. The active-site Proton acceptor is aspartate 200. Lysine 215 is modified (N6-acetyllysine). A Phosphoserine modification is found at serine 227. The residue at position 232 (threonine 232) is a Phosphothreonine; by autocatalysis.

It belongs to the protein kinase superfamily. Ser/Thr protein kinase family. Aurora subfamily. Component of the chromosomal passenger complex (CPC) composed of at least BIRC5/survivin, CDCA8/borealin, INCENP, AURKB or AURKC; predominantly independent AURKB- and AURKC-containing complexes exist. Associates with RACGAP1 during M phase. Interacts with SPDYC; this interaction may be required for proper localization of active, Thr-232-phosphorylated AURKB form during prometaphase and metaphase. Interacts with p53/TP53. Interacts (via the middle kinase domain) with NOC2L (via the N- and C-terminus domains). Interacts with CDCA1. Interacts with EVI5. Interacts with JTB. Interacts with NDC80. Interacts with PSMA3. Interacts with RNF2/RING1B. Interacts with SEPTIN1. Interacts with SIRT2. Interacts with TACC1. Interacts with TTC28. Post-translationally, the phosphorylation of Thr-232 requires the binding to INCENP and occurs by means of an autophosphorylation mechanism. Thr-232 phosphorylation is indispensable for the AURKB kinase activity. In terms of processing, acetylated at Lys-215 by KAT5 at kinetochores, increasing AURKB activity and promoting accurate chromosome segregation in mitosis. Ubiquitinated by different BCR (BTB-CUL3-RBX1) E3 ubiquitin ligase complexes. Ubiquitinated by the BCR(KLHL9-KLHL13) E3 ubiquitin ligase complex, ubiquitination leads to removal from mitotic chromosomes and is required for cytokinesis. During anaphase, the BCR(KLHL21) E3 ubiquitin ligase complex recruits the CPC complex from chromosomes to the spindle midzone and mediates the ubiquitination of AURKB. Ubiquitination of AURKB by BCR(KLHL21) E3 ubiquitin ligase complex may not lead to its degradation by the proteasome. Deubiquitinated by USP35; inhibiting CDH1-mediated degradation of AURKB.

The protein localises to the nucleus. Its subcellular location is the chromosome. The protein resides in the centromere. It is found in the kinetochore. It localises to the cytoplasm. The protein localises to the cytoskeleton. Its subcellular location is the spindle. The protein resides in the midbody. The enzyme catalyses L-seryl-[protein] + ATP = O-phospho-L-seryl-[protein] + ADP + H(+). It carries out the reaction L-threonyl-[protein] + ATP = O-phospho-L-threonyl-[protein] + ADP + H(+). Its activity is regulated as follows. Activity is greatly increased when AURKB is within the CPC complex. In particular, AURKB-phosphorylated INCENP acts as an activator of AURKB. Positive feedback between HASPIN and AURKB contributes to CPC localization. Its function is as follows. Serine/threonine-protein kinase component of the chromosomal passenger complex (CPC), a complex that acts as a key regulator of mitosis. The CPC complex has essential functions at the centromere in ensuring correct chromosome alignment and segregation and is required for chromatin-induced microtubule stabilization and spindle assembly. Involved in the bipolar attachment of spindle microtubules to kinetochores and is a key regulator for the onset of cytokinesis during mitosis. Required for central/midzone spindle assembly and cleavage furrow formation. Key component of the cytokinesis checkpoint, a process required to delay abscission to prevent both premature resolution of intercellular chromosome bridges and accumulation of DNA damage: phosphorylates CHMP4C, leading to retain abscission-competent VPS4 (VPS4A and/or VPS4B) at the midbody ring until abscission checkpoint signaling is terminated at late cytokinesis. AURKB phosphorylates the CPC complex subunits BIRC5/survivin, CDCA8/borealin and INCENP. Phosphorylation of INCENP leads to increased AURKB activity. Other known AURKB substrates involved in centromeric functions and mitosis are CENPA, DES/desmin, GPAF, KIF2C, NSUN2, RACGAP1, SEPTIN1, VIM/vimentin, HASPIN, and histone H3. A positive feedback loop involving HASPIN and AURKB contributes to localization of CPC to centromeres. Phosphorylation of VIM controls vimentin filament segregation in cytokinetic process, whereas histone H3 is phosphorylated at 'Ser-10' and 'Ser-28' during mitosis (H3S10ph and H3S28ph, respectively). AURKB is also required for kinetochore localization of BUB1 and SGO1. Phosphorylation of p53/TP53 negatively regulates its transcriptional activity. Key regulator of active promoters in resting B- and T-lymphocytes: acts by mediating phosphorylation of H3S28ph at active promoters in resting B-cells, inhibiting RNF2/RING1B-mediated ubiquitination of histone H2A and enhancing binding and activity of the USP16 deubiquitinase at transcribed genes. Acts as an inhibitor of CGAS during mitosis: catalyzes phosphorylation of the N-terminus of CGAS during the G2-M transition, blocking CGAS liquid phase separation and activation, and thereby preventing CGAS-induced autoimmunity. Phosphorylates KRT5 during anaphase and telophase. Phosphorylates ATXN10 which promotes phosphorylation of ATXN10 by PLK1 and may play a role in the regulation of cytokinesis and stimulating the proteasomal degradation of ATXN10. This Sus scrofa (Pig) protein is Aurora kinase B (AURKB).